The following is a 409-amino-acid chain: Glycogenin (409 aa).

Residues leucine 8, tyrosine 14, and arginine 80 each coordinate UDP. Leucine 8, tyrosine 14, arginine 80, lysine 89, aspartate 105, aspartate 107, asparagine 140, serine 141, aspartate 169, aspartate 172, and glutamine 173 together coordinate UDP-alpha-D-glucose. Residues aspartate 105 and aspartate 107 each contribute to the UDP site. Residues aspartate 105 and aspartate 107 each contribute to the Mn(2+) site. An O-linked (Glc...) tyrosine glycan is attached at tyrosine 212. Histidine 229, glycine 232, and lysine 235 together coordinate UDP. Residue histidine 229 coordinates Mn(2+). UDP-alpha-D-glucose contacts are provided by glycine 232 and lysine 235. Residues 283–303 (RIEEDSHETEEKVDEEVSISE) form a disordered region.

It belongs to the glycosyltransferase 8 family. Glycogenin subfamily. Requires Mn(2+) as cofactor.

It is found in the cytoplasm. Its subcellular location is the vacuole. The catalysed reaction is L-tyrosyl-[glycogenin] + UDP-alpha-D-glucose = alpha-D-glucosyl-L-tyrosyl-[glycogenin] + UDP + H(+). It carries out the reaction [1,4-alpha-D-glucosyl](n)-L-tyrosyl-[glycogenin] + UDP-alpha-D-glucose = [1,4-alpha-D-glucosyl](n+1)-L-tyrosyl-[glycogenin] + UDP + H(+). Its function is as follows. Glycogenin participates in the glycogen biosynthetic process along with glycogen synthase and glycogen branching enzyme. It catalyzes the formation of a short alpha (1,4)-glucosyl chain covalently attached via a glucose 1-O-tyrosyl linkage to internal tyrosine residues and these chains act as primers for the elongation reaction catalyzed by glycogen synthase. The polypeptide is Glycogenin (Komagataella phaffii (strain GS115 / ATCC 20864) (Yeast)).